A 365-amino-acid polypeptide reads, in one-letter code: Holliday junction branch migration complex subunit RuvB (365 aa).

The large ATPase domain (RuvB-L) stretch occupies residues 1 to 191 (MNFDPIDDFD…FGFTAHMDFY (191 aa)). ATP contacts are provided by residues leucine 30, arginine 31, glycine 72, lysine 75, threonine 76, serine 77, 138 to 140 (EDF), arginine 181, tyrosine 191, and arginine 228. A Mg(2+)-binding site is contributed by threonine 76. The segment at 192 to 262 (EPEELQQILM…VAQAALAVYD (71 aa)) is small ATPAse domain (RuvB-S). Residues 265-365 (QLGLDRLDRS…QATLFDPNGE (101 aa)) form a head domain (RuvB-H) region. Residues arginine 320 and arginine 325 each coordinate DNA.

The protein belongs to the RuvB family. In terms of assembly, homohexamer. Forms an RuvA(8)-RuvB(12)-Holliday junction (HJ) complex. HJ DNA is sandwiched between 2 RuvA tetramers; dsDNA enters through RuvA and exits via RuvB. An RuvB hexamer assembles on each DNA strand where it exits the tetramer. Each RuvB hexamer is contacted by two RuvA subunits (via domain III) on 2 adjacent RuvB subunits; this complex drives branch migration. In the full resolvosome a probable DNA-RuvA(4)-RuvB(12)-RuvC(2) complex forms which resolves the HJ.

The protein resides in the cytoplasm. The enzyme catalyses ATP + H2O = ADP + phosphate + H(+). Functionally, the RuvA-RuvB-RuvC complex processes Holliday junction (HJ) DNA during genetic recombination and DNA repair, while the RuvA-RuvB complex plays an important role in the rescue of blocked DNA replication forks via replication fork reversal (RFR). RuvA specifically binds to HJ cruciform DNA, conferring on it an open structure. The RuvB hexamer acts as an ATP-dependent pump, pulling dsDNA into and through the RuvAB complex. RuvB forms 2 homohexamers on either side of HJ DNA bound by 1 or 2 RuvA tetramers; 4 subunits per hexamer contact DNA at a time. Coordinated motions by a converter formed by DNA-disengaged RuvB subunits stimulates ATP hydrolysis and nucleotide exchange. Immobilization of the converter enables RuvB to convert the ATP-contained energy into a lever motion, pulling 2 nucleotides of DNA out of the RuvA tetramer per ATP hydrolyzed, thus driving DNA branch migration. The RuvB motors rotate together with the DNA substrate, which together with the progressing nucleotide cycle form the mechanistic basis for DNA recombination by continuous HJ branch migration. Branch migration allows RuvC to scan DNA until it finds its consensus sequence, where it cleaves and resolves cruciform DNA. This Rhodococcus erythropolis (strain PR4 / NBRC 100887) protein is Holliday junction branch migration complex subunit RuvB.